The following is a 473-amino-acid chain: Lactate utilization protein B (473 aa).

4Fe-4S ferredoxin-type domains lie at 302–332 (GSEFRQVLQCIRCAACVNVCPVYRHVGGHSY) and 351–380 (YNDYKELPYASSLCGACTEACPVKIPLHDL). [4Fe-4S] cluster is bound by residues cysteine 311, cysteine 314, cysteine 317, cysteine 321, cysteine 364, cysteine 367, and cysteine 371.

The protein belongs to the LutB/YkgF family.

Functionally, is involved in L-lactate degradation and allows cells to grow with lactate as the sole carbon source. Has probably a role as an electron transporter during oxidation of L-lactate. The chain is Lactate utilization protein B from Bacillus cereus (strain AH820).